We begin with the raw amino-acid sequence, 404 residues long: Metacaspase-1A (404 aa).

Residues 1-10 (MNPHHSHHHS) are compositionally biased toward basic residues. Residues 1–100 (MNPHHSHHHS…PSDPVSFGQG (100 aa)) form a disordered region. The span at 24–51 (QQQPPSNPYQYNQPSPQPYQGSQPPQNG) shows a compositional bias: low complexity. Active-site residues include histidine 200 and cysteine 256.

It belongs to the peptidase C14B family.

Functionally, involved in cell death (apoptosis). The protein is Metacaspase-1A (casA) of Aspergillus niger (strain ATCC MYA-4892 / CBS 513.88 / FGSC A1513).